The following is an 811-amino-acid chain: G-type lectin S-receptor-like serine/threonine-protein kinase LECRK2 (811 aa).

The first 23 residues, 1–23 (MAPLLFLPILQLLLLYCTKSAQA), serve as a signal peptide directing secretion. One can recognise a Bulb-type lectin domain in the interval 24–153 (QLNISIGSSL…DGATKWESFG (130 aa)). Residues 24–464 (QLNISIGSSL…DKKYWILGSS (441 aa)) are Extracellular-facing. Residues Asn-26, Asn-39, Asn-59, Asn-219, Asn-226, Asn-237, and Asn-242 are each glycosylated (N-linked (GlcNAc...) asparagine). Residues 292–344 (PENICQTIQTKVGSGACGFNSYCTFDGTKNTTNCLCPQRYKFFDNERTYKGCR) form the EGF-like; atypical domain. 5 disulfides stabilise this stretch: Cys-296-Cys-314, Cys-308-Cys-325, Cys-327-Cys-343, Cys-389-Cys-411, and Cys-393-Cys-399. Asn-321 carries N-linked (GlcNAc...) asparagine glycosylation. The PAN domain maps to 352–436 (CDLDETAAMV…LQATVLLKVP (85 aa)). A helical transmembrane segment spans residues 465–485 (LFFGSSVLVNFLLIFVLLFGT). Residues 486–811 (YCSITSRKKT…DPSSYISSLA (326 aa)) lie on the Cytoplasmic side of the membrane. The region spanning 521–795 (GGFHEVLGTG…KVMQMLDGAV (275 aa)) is the Protein kinase domain. Residues 527 to 535 (LGTGASGIV) and Lys-551 each bind ATP. Residue Asp-645 is the Proton acceptor of the active site.

Belongs to the protein kinase superfamily. Ser/Thr protein kinase family.

The protein localises to the membrane. It catalyses the reaction L-seryl-[protein] + ATP = O-phospho-L-seryl-[protein] + ADP + H(+). It carries out the reaction L-threonyl-[protein] + ATP = O-phospho-L-threonyl-[protein] + ADP + H(+). Its function is as follows. Involved in resistance against the herbivorous insect brown planthopper (N.lugens, BPH). Member of the BPH3 (BPH resistance locus 3) cluster which contains LECRK1, LECRK2 and LECRK3. This chain is G-type lectin S-receptor-like serine/threonine-protein kinase LECRK2, found in Oryza sativa subsp. japonica (Rice).